The following is a 908-amino-acid chain: Probable RNA-directed DNA polymerase from transposon X-element (908 aa).

Positions 481-752 (AIVRLQYFPY…NAAKYLGVLL (272 aa)) constitute a Reverse transcriptase domain. Residues 883–908 (RPPRRLNRRQPRDLITRSPLTRVRRS) are disordered.

Mg(2+) is required as a cofactor. Requires Mn(2+) as cofactor.

The enzyme catalyses DNA(n) + a 2'-deoxyribonucleoside 5'-triphosphate = DNA(n+1) + diphosphate. In Drosophila melanogaster (Fruit fly), this protein is Probable RNA-directed DNA polymerase from transposon X-element (X-element\ORF2).